The primary structure comprises 343 residues: Ribosomal RNA small subunit methyltransferase C (343 aa).

This sequence belongs to the methyltransferase superfamily. RsmC family. In terms of assembly, monomer.

The protein resides in the cytoplasm. The catalysed reaction is guanosine(1207) in 16S rRNA + S-adenosyl-L-methionine = N(2)-methylguanosine(1207) in 16S rRNA + S-adenosyl-L-homocysteine + H(+). In terms of biological role, specifically methylates the guanine in position 1207 of 16S rRNA in the 30S particle. This Escherichia coli O7:K1 (strain IAI39 / ExPEC) protein is Ribosomal RNA small subunit methyltransferase C.